Here is a 479-residue protein sequence, read N- to C-terminus: Protein nucleotidyltransferase YdiU (479 aa).

ATP contacts are provided by Gly83, Gly85, Arg86, Lys106, Asp118, Gly119, Arg169, and Arg176. Asp245 functions as the Proton acceptor in the catalytic mechanism. Mg(2+)-binding residues include Asn246 and Asp255. ATP is bound at residue Asp255.

Belongs to the SELO family. It depends on Mg(2+) as a cofactor. Requires Mn(2+) as cofactor.

The enzyme catalyses L-seryl-[protein] + ATP = 3-O-(5'-adenylyl)-L-seryl-[protein] + diphosphate. The catalysed reaction is L-threonyl-[protein] + ATP = 3-O-(5'-adenylyl)-L-threonyl-[protein] + diphosphate. It carries out the reaction L-tyrosyl-[protein] + ATP = O-(5'-adenylyl)-L-tyrosyl-[protein] + diphosphate. It catalyses the reaction L-histidyl-[protein] + UTP = N(tele)-(5'-uridylyl)-L-histidyl-[protein] + diphosphate. The enzyme catalyses L-seryl-[protein] + UTP = O-(5'-uridylyl)-L-seryl-[protein] + diphosphate. The catalysed reaction is L-tyrosyl-[protein] + UTP = O-(5'-uridylyl)-L-tyrosyl-[protein] + diphosphate. In terms of biological role, nucleotidyltransferase involved in the post-translational modification of proteins. It can catalyze the addition of adenosine monophosphate (AMP) or uridine monophosphate (UMP) to a protein, resulting in modifications known as AMPylation and UMPylation. The chain is Protein nucleotidyltransferase YdiU from Erwinia tasmaniensis (strain DSM 17950 / CFBP 7177 / CIP 109463 / NCPPB 4357 / Et1/99).